We begin with the raw amino-acid sequence, 484 residues long: Malonate-semialdehyde dehydrogenase 3 (484 aa).

Positions 152, 176, 179, 180, and 229 each coordinate NAD(+). Cys284 acts as the Nucleophile in catalysis. Glu384 serves as a coordination point for NAD(+).

The protein belongs to the aldehyde dehydrogenase family. IolA subfamily. Homotetramer.

It carries out the reaction 3-oxopropanoate + NAD(+) + CoA + H2O = hydrogencarbonate + acetyl-CoA + NADH + H(+). The enzyme catalyses 2-methyl-3-oxopropanoate + NAD(+) + CoA + H2O = propanoyl-CoA + hydrogencarbonate + NADH + H(+). Its pathway is polyol metabolism; myo-inositol degradation into acetyl-CoA; acetyl-CoA from myo-inositol: step 7/7. Its function is as follows. Catalyzes the oxidation of malonate semialdehyde (MSA) and methylmalonate semialdehyde (MMSA) into acetyl-CoA and propanoyl-CoA, respectively. Is involved in a myo-inositol catabolic pathway. Bicarbonate, and not CO2, is the end-product of the enzymatic reaction. In Geobacillus kaustophilus (strain HTA426), this protein is Malonate-semialdehyde dehydrogenase 3.